The primary structure comprises 158 residues: MAKSNYITRQGWLALDQELKFLWKEERPKVTQAVSDAAALGDRSENAEYIYGKRRLREIDRRVRFLTKRLEVLQIVDYNPKQEGKVFFGAWVELENEEGETKQYRIVGCDEFAPAKNWISIDSPVARALIGKTLDDEVRVETPSGFITLYVNKIWYEK.

Positions 53-75 (KRRLREIDRRVRFLTKRLEVLQI) form a coiled coil.

Belongs to the GreA/GreB family. GreB subfamily.

Its function is as follows. Necessary for efficient RNA polymerase transcription elongation past template-encoded arresting sites. The arresting sites in DNA have the property of trapping a certain fraction of elongating RNA polymerases that pass through, resulting in locked ternary complexes. Cleavage of the nascent transcript by cleavage factors such as GreA or GreB allows the resumption of elongation from the new 3'terminus. GreB releases sequences of up to 9 nucleotides in length. This is Transcription elongation factor GreB from Haemophilus influenzae (strain ATCC 51907 / DSM 11121 / KW20 / Rd).